The chain runs to 637 residues: Threonine--tRNA ligase (637 aa).

Residues 1–61 (MIKVTLKDGK…DKDCNLEILT (61 aa)) form the TGS domain. The segment at 242-532 (DHRKIGKELD…LIEHYAGAFP (291 aa)) is catalytic. The Zn(2+) site is built by cysteine 333, histidine 384, and histidine 509.

The protein belongs to the class-II aminoacyl-tRNA synthetase family. In terms of assembly, homodimer. The cofactor is Zn(2+).

It is found in the cytoplasm. The enzyme catalyses tRNA(Thr) + L-threonine + ATP = L-threonyl-tRNA(Thr) + AMP + diphosphate + H(+). Its function is as follows. Catalyzes the attachment of threonine to tRNA(Thr) in a two-step reaction: L-threonine is first activated by ATP to form Thr-AMP and then transferred to the acceptor end of tRNA(Thr). Also edits incorrectly charged L-seryl-tRNA(Thr). The polypeptide is Threonine--tRNA ligase (Clostridium acetobutylicum (strain ATCC 824 / DSM 792 / JCM 1419 / IAM 19013 / LMG 5710 / NBRC 13948 / NRRL B-527 / VKM B-1787 / 2291 / W)).